We begin with the raw amino-acid sequence, 248 residues long: Triosephosphate isomerase (248 aa).

9–11 contributes to the substrate binding site; it reads NWK. His-101 acts as the Electrophile in catalysis. Glu-170 acts as the Proton acceptor in catalysis. Substrate-binding positions include Gly-176, Ser-208, and 229–230; that span reads GG.

Belongs to the triosephosphate isomerase family. In terms of assembly, homodimer.

It localises to the cytoplasm. It carries out the reaction D-glyceraldehyde 3-phosphate = dihydroxyacetone phosphate. Its pathway is carbohydrate biosynthesis; gluconeogenesis. It participates in carbohydrate degradation; glycolysis; D-glyceraldehyde 3-phosphate from glycerone phosphate: step 1/1. Involved in the gluconeogenesis. Catalyzes stereospecifically the conversion of dihydroxyacetone phosphate (DHAP) to D-glyceraldehyde-3-phosphate (G3P). This chain is Triosephosphate isomerase, found in Mycoplasmopsis pulmonis (strain UAB CTIP) (Mycoplasma pulmonis).